The chain runs to 94 residues: UPF0337 protein NE2439 (94 aa).

The disordered stretch occupies residues 74–94 (KNVGEAVSSRQKSVKKRSLYT). A compositionally biased stretch (basic residues) spans 85-94 (KSVKKRSLYT).

The protein belongs to the UPF0337 (CsbD) family.

The protein is UPF0337 protein NE2439 of Nitrosomonas europaea (strain ATCC 19718 / CIP 103999 / KCTC 2705 / NBRC 14298).